The chain runs to 175 residues: Co-chaperone protein HscB homolog (175 aa).

Residues 7–79 (SHFDLFHLPA…LKRASYLLSL (73 aa)) form the J domain.

The protein belongs to the HscB family. Interacts with HscA and stimulates its ATPase activity.

Co-chaperone involved in the maturation of iron-sulfur cluster-containing proteins. Seems to help targeting proteins to be folded toward HscA. The protein is Co-chaperone protein HscB homolog of Burkholderia cenocepacia (strain ATCC BAA-245 / DSM 16553 / LMG 16656 / NCTC 13227 / J2315 / CF5610) (Burkholderia cepacia (strain J2315)).